Here is a 556-residue protein sequence, read N- to C-terminus: Oxygen-dependent choline dehydrogenase (556 aa).

Position 4-33 (4-33 (DYIIIGAGSAGNVLATRLTEDPNTTVLLLE)) interacts with FAD. His-473 functions as the Proton acceptor in the catalytic mechanism.

The protein belongs to the GMC oxidoreductase family. FAD is required as a cofactor.

The catalysed reaction is choline + A = betaine aldehyde + AH2. It carries out the reaction betaine aldehyde + NAD(+) + H2O = glycine betaine + NADH + 2 H(+). It participates in amine and polyamine biosynthesis; betaine biosynthesis via choline pathway; betaine aldehyde from choline (cytochrome c reductase route): step 1/1. Functionally, involved in the biosynthesis of the osmoprotectant glycine betaine. Catalyzes the oxidation of choline to betaine aldehyde and betaine aldehyde to glycine betaine at the same rate. The polypeptide is Oxygen-dependent choline dehydrogenase (Escherichia coli O17:K52:H18 (strain UMN026 / ExPEC)).